We begin with the raw amino-acid sequence, 918 residues long: Aconitase-ribosomal protein bL21m fusion protein (918 aa).

Residues 1–30 (MATFARMKLCLSGSSQAIPSKGISLVAARF) constitute a mitochondrion transit peptide. The tract at residues 31–811 (QSTASRASYV…IDSIKQQPDH (781 aa)) is homocitrate dehydratase, mitochondrial. Substrate is bound by residues glutamine 105 and 198 to 200 (DSH). [4Fe-4S] cluster is bound by residues cysteine 394, cysteine 457, and cysteine 460. Substrate contacts are provided by residues arginine 484, arginine 489, lysine 619, and 680–681 (AR). A large ribosomal subunit protein bL21m region spans residues 812–918 (YADAYIFNRH…ILRVTELKLN (107 aa)).

This sequence in the N-terminal section; belongs to the aconitase/IPM isomerase family. It in the C-terminal section; belongs to the bacterial ribosomal protein bL21 family. As to quaternary structure, component of the mitochondrial large ribosomal subunit (mt-LSU). Mature yeast 74S mitochondrial ribosomes consist of a small (37S) and a large (54S) subunit. The 37S small subunit contains a 15S ribosomal RNA (15S mt-rRNA) and at least 32 different proteins. The 54S large subunit contains a 21S rRNA (21S mt-rRNA) and at least 45 different proteins. [4Fe-4S] cluster is required as a cofactor.

The protein localises to the mitochondrion. Its subcellular location is the nucleus. It carries out the reaction (2R)-homocitrate = cis-homoaconitate + H2O. The protein operates within amino-acid biosynthesis; L-lysine biosynthesis via AAA pathway; L-alpha-aminoadipate from 2-oxoglutarate: step 2/5. Functionally, catalyzes the reversible dehydration of (R)-homocitrate to cis-homoaconitate, a step in the alpha-aminoadipate pathway for lysine biosynthesis. Component of the mitochondrial ribosome (mitoribosome), a dedicated translation machinery responsible for the synthesis of mitochondrial genome-encoded proteins, including at least some of the essential transmembrane subunits of the mitochondrial respiratory chain. The mitoribosomes are attached to the mitochondrial inner membrane and translation products are cotranslationally integrated into the membrane. This chain is Aconitase-ribosomal protein bL21m fusion protein (aco2), found in Schizosaccharomyces pombe (strain 972 / ATCC 24843) (Fission yeast).